The following is a 502-amino-acid chain: Probable glycine dehydrogenase (decarboxylating) subunit 2 (502 aa).

Position 273 is an N6-(pyridoxal phosphate)lysine (Lys-273).

It belongs to the GcvP family. C-terminal subunit subfamily. In terms of assembly, the glycine cleavage system is composed of four proteins: P, T, L and H. In this organism, the P 'protein' is a heterodimer of two subunits. Pyridoxal 5'-phosphate serves as cofactor.

The catalysed reaction is N(6)-[(R)-lipoyl]-L-lysyl-[glycine-cleavage complex H protein] + glycine + H(+) = N(6)-[(R)-S(8)-aminomethyldihydrolipoyl]-L-lysyl-[glycine-cleavage complex H protein] + CO2. Its function is as follows. The glycine cleavage system catalyzes the degradation of glycine. The P protein binds the alpha-amino group of glycine through its pyridoxal phosphate cofactor; CO(2) is released and the remaining methylamine moiety is then transferred to the lipoamide cofactor of the H protein. This chain is Probable glycine dehydrogenase (decarboxylating) subunit 2, found in Staphylococcus epidermidis (strain ATCC 35984 / DSM 28319 / BCRC 17069 / CCUG 31568 / BM 3577 / RP62A).